Here is a 152-residue protein sequence, read N- to C-terminus: Xanthine-guanine phosphoribosyltransferase (152 aa).

Residues 37-38 (RG), Arg-69, and 88-96 (DDLVDSGDT) contribute to the 5-phospho-alpha-D-ribose 1-diphosphate site. GMP is bound at residue Arg-69. Asp-89 is a binding site for Mg(2+). The guanine site is built by Asp-92 and Ile-135. Residues Asp-92 and Ile-135 each coordinate xanthine. GMP-binding positions include 92 to 96 (DSGDT) and 134 to 135 (WI).

Belongs to the purine/pyrimidine phosphoribosyltransferase family. XGPT subfamily. In terms of assembly, homotetramer. Mg(2+) is required as a cofactor.

Its subcellular location is the cell inner membrane. The catalysed reaction is GMP + diphosphate = guanine + 5-phospho-alpha-D-ribose 1-diphosphate. It catalyses the reaction XMP + diphosphate = xanthine + 5-phospho-alpha-D-ribose 1-diphosphate. The enzyme catalyses IMP + diphosphate = hypoxanthine + 5-phospho-alpha-D-ribose 1-diphosphate. It functions in the pathway purine metabolism; GMP biosynthesis via salvage pathway; GMP from guanine: step 1/1. The protein operates within purine metabolism; XMP biosynthesis via salvage pathway; XMP from xanthine: step 1/1. Functionally, purine salvage pathway enzyme that catalyzes the transfer of the ribosyl-5-phosphate group from 5-phospho-alpha-D-ribose 1-diphosphate (PRPP) to the N9 position of the 6-oxopurines guanine and xanthine to form the corresponding ribonucleotides GMP (guanosine 5'-monophosphate) and XMP (xanthosine 5'-monophosphate), with the release of PPi. To a lesser extent, also acts on hypoxanthine. In Aliivibrio fischeri (strain ATCC 700601 / ES114) (Vibrio fischeri), this protein is Xanthine-guanine phosphoribosyltransferase.